The following is a 207-amino-acid chain: Segregation and condensation protein B (207 aa).

It belongs to the ScpB family. Homodimer. Homodimerization may be required to stabilize the binding of ScpA to the Smc head domains. Component of a cohesin-like complex composed of ScpA, ScpB and the Smc homodimer, in which ScpA and ScpB bind to the head domain of Smc. The presence of the three proteins is required for the association of the complex with DNA.

It localises to the cytoplasm. Participates in chromosomal partition during cell division. May act via the formation of a condensin-like complex containing Smc and ScpA that pull DNA away from mid-cell into both cell halves. The chain is Segregation and condensation protein B from Mycoplasmopsis pulmonis (strain UAB CTIP) (Mycoplasma pulmonis).